A 187-amino-acid chain; its full sequence is MQDPKETINIENVVASTGIGQELDLQSVAMDLEGADYDPEQFPGLVYRTQEPKSAALIFRSGKIVCTGAKSTDDVHESLRIVFDKLRDLEIQVDEDPEIVVQNIVTSADLGRNLNLNAIAIGLGLENIEYEPEQFPGLVYRLDDPDVVALLFGSGKLVITGGKEPDDAREAVDKIVSRLEELGLLDG.

A run of 2 repeats spans residues 10 to 86 (IENV…FDKL) and 101 to 179 (VQNI…VSRL).

It belongs to the TBP family.

General factor that plays a role in the activation of archaeal genes transcribed by RNA polymerase. Binds specifically to the TATA box promoter element which lies close to the position of transcription initiation. The polypeptide is TATA-box-binding protein (Natronomonas pharaonis (strain ATCC 35678 / DSM 2160 / CIP 103997 / JCM 8858 / NBRC 14720 / NCIMB 2260 / Gabara) (Halobacterium pharaonis)).